The chain runs to 193 residues: NAD(P)H-quinone oxidoreductase subunit I (193 aa).

4Fe-4S ferredoxin-type domains follow at residues 56–85 (GRIH…VDWE) and 96–125 (KHYS…MTEE). Positions 65, 68, 71, 75, 105, 108, 111, and 115 each coordinate [4Fe-4S] cluster. The tract at residues 174-193 (NLPKGSQRAGQHPEDLVKAE) is disordered. Residues 184–193 (QHPEDLVKAE) are compositionally biased toward basic and acidic residues.

It belongs to the complex I 23 kDa subunit family. In terms of assembly, NDH-1 is composed of at least 11 different subunits. It depends on [4Fe-4S] cluster as a cofactor.

It is found in the cellular thylakoid membrane. It carries out the reaction a plastoquinone + NADH + (n+1) H(+)(in) = a plastoquinol + NAD(+) + n H(+)(out). It catalyses the reaction a plastoquinone + NADPH + (n+1) H(+)(in) = a plastoquinol + NADP(+) + n H(+)(out). Its function is as follows. NDH-1 shuttles electrons from an unknown electron donor, via FMN and iron-sulfur (Fe-S) centers, to quinones in the respiratory and/or the photosynthetic chain. The immediate electron acceptor for the enzyme in this species is believed to be plastoquinone. Couples the redox reaction to proton translocation, and thus conserves the redox energy in a proton gradient. The protein is NAD(P)H-quinone oxidoreductase subunit I of Synechocystis sp. (strain ATCC 27184 / PCC 6803 / Kazusa).